The primary structure comprises 316 residues: Methionyl-tRNA formyltransferase (316 aa).

112–115 (SLLP) lines the (6S)-5,6,7,8-tetrahydrofolate pocket.

The protein belongs to the Fmt family.

It catalyses the reaction L-methionyl-tRNA(fMet) + (6R)-10-formyltetrahydrofolate = N-formyl-L-methionyl-tRNA(fMet) + (6S)-5,6,7,8-tetrahydrofolate + H(+). Attaches a formyl group to the free amino group of methionyl-tRNA(fMet). The formyl group appears to play a dual role in the initiator identity of N-formylmethionyl-tRNA by promoting its recognition by IF2 and preventing the misappropriation of this tRNA by the elongation apparatus. This Haemophilus ducreyi (strain 35000HP / ATCC 700724) protein is Methionyl-tRNA formyltransferase.